A 507-amino-acid chain; its full sequence is Keratin, type II cuticular Hb5 (507 aa).

The interval 1–123 is head; the sequence is MSCRSYRISS…PNAQCVKQEE (123 aa). An IF rod domain is found at 123–434; that stretch reads EKEQIKSLNS…RLLEGEEHRL (312 aa). Positions 124–158 are coil 1A; it reads KEQIKSLNSRFAAFIDKVRFLEQQNKLLETKWQFY. The segment at 159 to 168 is linker 1; it reads QNQRCCESNL. A coil 1B region spans residues 169–269; that stretch reads EPLFSGYIET…YEEEIRVLQA (101 aa). K229 is covalently cross-linked (Glycyl lysine isopeptide (Lys-Gly) (interchain with G-Cter in SUMO1)). The segment at 270–286 is linker 12; sequence HISDTSVIVKMDNSRDL. The coil 2 stretch occupies residues 287-430; that stretch reads NMDCIIAEIK…ATYRRLLEGE (144 aa). The tail stretch occupies residues 431 to 507; it reads EHRLCEGVGS…CGSSRSVRFA (77 aa).

The protein belongs to the intermediate filament family. Heterotetramer of two type I and two type II keratins. In terms of tissue distribution, synthesis occurs immediately above a small population of matrix cells at the base of the hair bulb and the trichocytes lining the dermal papilla and extends upward through the matrix and ends in the lower part of the cortex of the hair shaft.

In Homo sapiens (Human), this protein is Keratin, type II cuticular Hb5 (KRT85).